We begin with the raw amino-acid sequence, 157 residues long: Transcriptional repressor NrdR (157 aa).

A disordered region spans residues 1–22 (MRCPKCGATKSSVIDSRQAEEG). A zinc finger spans residues 3 to 34 (CPKCGATKSSVIDSRQAEEGNTIRRRRECDEC). The ATP-cone domain maps to 49 to 139 (LVVVKKDGTR…VYRSFKDVSE (91 aa)).

The protein belongs to the NrdR family. Requires Zn(2+) as cofactor.

Negatively regulates transcription of bacterial ribonucleotide reductase nrd genes and operons by binding to NrdR-boxes. This is Transcriptional repressor NrdR from Streptococcus pneumoniae (strain Hungary19A-6).